The sequence spans 297 residues: Non-structural protein VP10 (297 aa).

The polypeptide is Non-structural protein VP10 (Oryza latifolia (Indian wild rice)).